A 1798-amino-acid chain; its full sequence is Focadhesin (1798 aa).

Lys816 is subject to N6-acetyllysine.

Interacts with VCL. Expressed by glial and neuronal cells in brain.

It is found in the cell junction. Its subcellular location is the focal adhesion. The protein resides in the cytoplasm. The protein localises to the cytosol. Required for the maintenance of SKIC2 and SKIC3 proteostatic levels in the liver. May be involved in the regulation of RNA degradation by the exosome complex. Potential tumor suppressor in gliomas. In Mus musculus (Mouse), this protein is Focadhesin (Focad).